Consider the following 418-residue polypeptide: Beta-arrestin-1 (418 aa).

An interaction with SRC region spans residues 1-163 (MGDKGTRVFK…LEEKIHKRNS (163 aa)). Residues 45–86 (PEYLKERRVYVTLTCAFRYGREDLDVLGLTFRKDLFVANVQS) are interaction with CHRM2. Tyr-47 is subject to Phosphotyrosine. Residues Lys-250, Met-255, Lys-324, and Lys-326 each contribute to the 1D-myo-inositol hexakisphosphate site. Residues 318–418 (IVSYKVKVKL…GTGSPHLNNR (101 aa)) are interaction with TRAF6. Disordered regions lie at residues 353-374 (HPKPKEEPPHREVPESETPVDT) and 397-418 (KGMKDDKDEEDDGTGSPHLNNR). The segment covering 355–366 (KPKEEPPHREVP) has biased composition (basic and acidic residues). Phosphoserine is present on Ser-412. Position 412 is a phosphoserine; by GRK5 (Ser-412).

The protein belongs to the arrestin family. As to quaternary structure, monomer. Homodimer. Homooligomer; the self-association is mediated by InsP6-binding. Heterooligomer with ARRB2; the association is mediated by InsP6-binding. Interacts with ADRB2 (phosphorylated). Interacts with CHRM2 (phosphorylated). Interacts with LHCGR. Interacts with CYTH2 and CASR. Interacts with AP2B1 (dephosphorylated at 'Tyr-737'); phosphorylation of AP2B1 at 'Tyr-737' disrupts the interaction. Interacts (dephosphorylated at Ser-412) with CLTC. Interacts with CCR2 and GRK2. Interacts with CRR5. Interacts with PTAFR (phosphorylated on serine residues). Interacts with CLTC and MAP2K3. Interacts with CREB1. Interacts with TRAF6. Interacts with IGF1R and MDM2. Interacts with C5AR1. Interacts with PDE4D. Interacts with SRC (via the SH3 domain and the protein kinase domain); the interaction is independent of the phosphorylation state of SRC C-terminus. Interacts with TACR1. Interacts with RAF1. Interacts with CHUK, IKBKB and MAP3K14. Interacts with DVL1; the interaction is enhanced by phosphorylation of DVL1. Interacts with DVL2; the interaction is enhanced by phosphorylation of DVL2. Interacts with IGF1R. Associates with MAP kinase p38. Part of a MAPK signaling complex consisting of TACR1, ARRB1, SRC, MAPK1 (activated) and MAPK3 (activated). Part of a MAPK signaling complex consisting of F2RL1, ARRB1, RAF1, MAPK1 (activated) and MAPK3 (activated). Interacts with GPR143. Interacts with MAP2K4/MKK4. Interacts with HCK and CXCR1 (phosphorylated). Interacts with ACKR3 and ACKR4. Interacts with ARRDC1; the interaction is direct. Interacts with GPR61, GPR62 and GPR135. Post-translationally, constitutively phosphorylated at Ser-412 in the cytoplasm. At the plasma membrane, is rapidly dephosphorylated, a process that is required for clathrin binding and beta-2 adrenergic receptor/ADRB2 endocytosis but not for ADRB2 binding and desensitization. Once internalized, is rephosphorylated. In terms of processing, the ubiquitination status appears to regulate the formation and trafficking of beta-arrestin-GPCR complexes and signaling. Ubiquitination appears to occur GPCR-specific. Ubiquitinated by MDM2; the ubiquitination is required for rapid internalization of ADRB2. Deubiquitinated by USP33; the deubiquitination leads to a dissociation of the beta-arrestin-GPCR complex. Stimulation of a class A GPCR, such as ADRB2, induces transient ubiquitination and subsequently promotes association with USP33. Predominantly localized in neuronal tissues and in the spleen.

It is found in the cytoplasm. The protein resides in the nucleus. Its subcellular location is the cell membrane. It localises to the membrane. The protein localises to the clathrin-coated pit. It is found in the cell projection. The protein resides in the pseudopodium. Its subcellular location is the cytoplasmic vesicle. Functions in regulating agonist-mediated G-protein coupled receptor (GPCR) signaling by mediating both receptor desensitization and resensitization processes. During homologous desensitization, beta-arrestins bind to the GPRK-phosphorylated receptor and sterically preclude its coupling to the cognate G-protein; the binding appears to require additional receptor determinants exposed only in the active receptor conformation. The beta-arrestins target many receptors for internalization by acting as endocytic adapters (CLASPs, clathrin-associated sorting proteins) and recruiting the GPRCs to the adapter protein 2 complex 2 (AP-2) in clathrin-coated pits (CCPs). However, the extent of beta-arrestin involvement appears to vary significantly depending on the receptor, agonist and cell type. Internalized arrestin-receptor complexes traffic to intracellular endosomes, where they remain uncoupled from G-proteins. Two different modes of arrestin-mediated internalization occur. Class A receptors, like ADRB2, OPRM1, ENDRA, D1AR and ADRA1B dissociate from beta-arrestin at or near the plasma membrane and undergo rapid recycling. Class B receptors, like AVPR2, AGTR1, NTSR1, TRHR and TACR1 internalize as a complex with arrestin and traffic with it to endosomal vesicles, presumably as desensitized receptors, for extended periods of time. Receptor resensitization then requires that receptor-bound arrestin is removed so that the receptor can be dephosphorylated and returned to the plasma membrane. Involved in internalization of P2RY4 and UTP-stimulated internalization of P2RY2. Involved in phosphorylation-dependent internalization of OPRD1 ands subsequent recycling. Involved in the degradation of cAMP by recruiting cAMP phosphodiesterases to ligand-activated receptors. Beta-arrestins function as multivalent adapter proteins that can switch the GPCR from a G-protein signaling mode that transmits short-lived signals from the plasma membrane via small molecule second messengers and ion channels to a beta-arrestin signaling mode that transmits a distinct set of signals that are initiated as the receptor internalizes and transits the intracellular compartment. Acts as a signaling scaffold for MAPK pathways such as MAPK1/3 (ERK1/2). ERK1/2 activated by the beta-arrestin scaffold is largely excluded from the nucleus and confined to cytoplasmic locations such as endocytic vesicles, also called beta-arrestin signalosomes. Recruits c-Src/SRC to ADRB2 resulting in ERK activation. GPCRs for which the beta-arrestin-mediated signaling relies on both ARRB1 and ARRB2 (codependent regulation) include ADRB2, F2RL1 and PTH1R. For some GPCRs the beta-arrestin-mediated signaling relies on either ARRB1 or ARRB2 and is inhibited by the other respective beta-arrestin form (reciprocal regulation). Inhibits ERK1/2 signaling in AGTR1- and AVPR2-mediated activation (reciprocal regulation). Is required for SP-stimulated endocytosis of NK1R and recruits c-Src/SRC to internalized NK1R resulting in ERK1/2 activation, which is required for the antiapoptotic effects of SP. Is involved in proteinase-activated F2RL1-mediated ERK activity. Acts as a signaling scaffold for the AKT1 pathway. Is involved in alpha-thrombin-stimulated AKT1 signaling. Is involved in IGF1-stimulated AKT1 signaling leading to increased protection from apoptosis. Involved in activation of the p38 MAPK signaling pathway and in actin bundle formation. Involved in F2RL1-mediated cytoskeletal rearrangement and chemotaxis. Involved in AGTR1-mediated stress fiber formation by acting together with GNAQ to activate RHOA. Appears to function as signaling scaffold involved in regulation of MIP-1-beta-stimulated CCR5-dependent chemotaxis. Involved in attenuation of NF-kappa-B-dependent transcription in response to GPCR or cytokine stimulation by interacting with and stabilizing CHUK. May serve as nuclear messenger for GPCRs. Involved in OPRD1-stimulated transcriptional regulation by translocating to CDKN1B and FOS promoter regions and recruiting EP300 resulting in acetylation of histone H4. Involved in regulation of LEF1 transcriptional activity via interaction with DVL1 and/or DVL2 Also involved in regulation of receptors other than GPCRs. Involved in Toll-like receptor and IL-1 receptor signaling through the interaction with TRAF6 which prevents TRAF6 autoubiquitination and oligomerization required for activation of NF-kappa-B and JUN. Binds phosphoinositides. Binds inositolhexakisphosphate (InsP6). Involved in IL8-mediated granule release in neutrophils. Required for atypical chemokine receptor ACKR2-induced RAC1-LIMK1-PAK1-dependent phosphorylation of cofilin (CFL1) and for the up-regulation of ACKR2 from endosomal compartment to cell membrane, increasing its efficiency in chemokine uptake and degradation. Involved in the internalization of the atypical chemokine receptor ACKR3. Negatively regulates the NOTCH signaling pathway by mediating the ubiquitination and degradation of NOTCH1 by ITCH. Participates in the recruitment of the ubiquitin-protein ligase to the receptor. This Rattus norvegicus (Rat) protein is Beta-arrestin-1.